Reading from the N-terminus, the 380-residue chain is MADARKAALDTALKKIEKNFGKGAIMRMGDAAQTTISTISSGSLALDDALGVGGYPRGRIVEIYGPESSGKTTVALHAVAEVQKQGGTAAYIDAENALDPVYAEHLGVNIDDLLLSQPDTGEQGLEIADALVSSGAVDILVVDSVAALVPRAEIEGEMGDAHVGLQARLMSQALRKLSGTLNKTKTIALFINQIREKVGVMFGNPETTPGGRALKFYATIRLEVRRAEQIKEGTNIIGNRVRIKVVKNKVAPPFKRAEVDIMYGQGISQTGEIVDMAAEKDIVKKSGSWYSYGDDRIGQGRENAKKYLDEHPDVMTEIRQKVRDAYGMDATGEETSETDDQAKEAKDKGTAKNGSKGQSKSTKATPAETALDLGDQPTEK.

ATP is bound at residue 65–72 (GPESSGKT). A disordered region spans residues 329–380 (DATGEETSETDDQAKEAKDKGTAKNGSKGQSKSTKATPAETALDLGDQPTEK). The span at 340–350 (DQAKEAKDKGT) shows a compositional bias: basic and acidic residues. Residues 352 to 364 (KNGSKGQSKSTKA) are compositionally biased toward polar residues.

The protein belongs to the RecA family.

The protein resides in the cytoplasm. Its function is as follows. Can catalyze the hydrolysis of ATP in the presence of single-stranded DNA, the ATP-dependent uptake of single-stranded DNA by duplex DNA, and the ATP-dependent hybridization of homologous single-stranded DNAs. It interacts with LexA causing its activation and leading to its autocatalytic cleavage. The sequence is that of Protein RecA from Lactiplantibacillus plantarum (strain ATCC BAA-793 / NCIMB 8826 / WCFS1) (Lactobacillus plantarum).